The primary structure comprises 49 residues: Large ribosomal subunit protein bL33B (49 aa).

The protein belongs to the bacterial ribosomal protein bL33 family.

The protein is Large ribosomal subunit protein bL33B of Lacticaseibacillus paracasei (strain ATCC 334 / BCRC 17002 / CCUG 31169 / CIP 107868 / KCTC 3260 / NRRL B-441) (Lactobacillus paracasei).